The primary structure comprises 428 residues: Histidinol dehydrogenase (428 aa).

Residues serine 234, glutamine 256, and histidine 259 each contribute to the substrate site. Zn(2+) is bound by residues glutamine 256 and histidine 259. Catalysis depends on proton acceptor residues glutamate 323 and histidine 324. Histidine 324, aspartate 357, glutamate 411, and histidine 416 together coordinate substrate. Aspartate 357 lines the Zn(2+) pocket. Zn(2+) is bound at residue histidine 416.

This sequence belongs to the histidinol dehydrogenase family. The cofactor is Zn(2+).

It catalyses the reaction L-histidinol + 2 NAD(+) + H2O = L-histidine + 2 NADH + 3 H(+). It participates in amino-acid biosynthesis; L-histidine biosynthesis; L-histidine from 5-phospho-alpha-D-ribose 1-diphosphate: step 9/9. In terms of biological role, catalyzes the sequential NAD-dependent oxidations of L-histidinol to L-histidinaldehyde and then to L-histidine. This Campylobacter jejuni (strain RM1221) protein is Histidinol dehydrogenase.